The following is a 284-amino-acid chain: Ribosomal RNA small subunit methyltransferase A (284 aa).

Residues asparagine 22, leucine 24, glycine 49, glutamate 70, aspartate 97, and asparagine 117 each contribute to the S-adenosyl-L-methionine site.

It belongs to the class I-like SAM-binding methyltransferase superfamily. rRNA adenine N(6)-methyltransferase family. RsmA subfamily.

The protein resides in the cytoplasm. The catalysed reaction is adenosine(1518)/adenosine(1519) in 16S rRNA + 4 S-adenosyl-L-methionine = N(6)-dimethyladenosine(1518)/N(6)-dimethyladenosine(1519) in 16S rRNA + 4 S-adenosyl-L-homocysteine + 4 H(+). In terms of biological role, specifically dimethylates two adjacent adenosines (A1518 and A1519) in the loop of a conserved hairpin near the 3'-end of 16S rRNA in the 30S particle. May play a critical role in biogenesis of 30S subunits. This chain is Ribosomal RNA small subunit methyltransferase A, found in Desulforapulum autotrophicum (strain ATCC 43914 / DSM 3382 / VKM B-1955 / HRM2) (Desulfobacterium autotrophicum).